The primary structure comprises 51 residues: Large ribosomal subunit protein bL33 (51 aa).

It belongs to the bacterial ribosomal protein bL33 family. As to quaternary structure, part of the 50S ribosomal subunit. Cross-links to the P and E site tRNAs.

In Pseudomonas aeruginosa (strain ATCC 15692 / DSM 22644 / CIP 104116 / JCM 14847 / LMG 12228 / 1C / PRS 101 / PAO1), this protein is Large ribosomal subunit protein bL33.